Consider the following 61-residue polypeptide: UPF0181 protein Ent638_2380 (61 aa).

This sequence belongs to the UPF0181 family.

This Enterobacter sp. (strain 638) protein is UPF0181 protein Ent638_2380.